The primary structure comprises 1270 residues: MITNQTERLNFASTKNIPAYPDFLDVQVKSFQDFFQLETKSDERGNEGLYNTFMENFPITDTRNNFVLEFIDYFVDPPRYTIQECIERGLTYSVPLKARLKLYCTDPEHEDFETIVQDVYLGTIPYMTPSGTFVINGAERVVVSQLHRSPGVFFGQSFHANGTKLYSARVIPFKGSWIEFATDINSVMYAYIDRKKKLPVTTLFRAIGFQSDKDILEIFDLAEEIKVSKSGLKKYIGRKLAARVLNTWHEDFVDEDTGEVVSIERNEIILDRDTILDKDNVEEIVESNVKSILLHKEDNNVVDYSIIHNTLQKDPTNSEKEAVEHIYRQLRNAEPPDEETARGIIDKLFFSDQRYNLGEVGRYRINKKLGLDTPMEKQVLTKEDIITIVKYLIELINAKADIDDIDHLSNRRVRTVGEQLSQQFGVGLARMARTIRERMNVRDNEVFTPIDLINAKTLSSVINSFFGTNQLSQFMDQTNPLAEITHKRRLSALGPGGLSRERAGFEVRDVHYTHYGRLCPIETPEGPNIGLISSLGVYAKVNGMGFIETPYRKVTNGVVDLTSVPKYLSAEEEEGMLIAQANIQMDENGKITADNVIARQEGDFPVIDPTAVHYTDVAPNQIASISASLIPFLEHDDANRALMGSNMMRQAVPLIRPEAPIVGTGLERQVASDSRVLINAEGAGVVEYVDADMITIKYDRTDAERAVSFESDEKTYKLIKFRKTNQGTSINLKPIVRKGDKVIKGQVLCEGYATQNGELALGRNLKVAFMPWKGYNFEDAIVISEKVVRDDIFTSIHVDDYSLEVRDTKLGNEELTNDIPNVSEEATKDLDENGMIRIGAEVKPGDILIGKITPKGESDPTPEEKLLRAIFGDKAGDVKDASLKASPSLHGVVLDKKLFARAVKDKRKRTQDKDALSDLEMEFEVKFVELKDKLVDKLFTIVNGKTSQGVMNDLGEEVLPKGKKYTQKMLYAVEDFAHLTRGQWVADDETNKMVNDLIHNYKIKLNDLQGALRREKFTITVGDELPAGILKLAKVYIAKKRKLKVGDKMAGRHGNKGIVARIVRHEDMPFLEDGTPVDIVLNPLGVPSRMNIGQIYETVLGWAGQNLGRKYATPIFDGASLDQINAITDEAGVPRFGHTHLYDGGTGERFHQAATVGVIYMLKLGHMVDDKMHARSIGPYSLITQQPLGGKAQFGGQRFGEMEVWALEAYGASSTLREILTVKSDDVIGRAKTYEAIVKGETMPEPGLPESFNVLMHELKGLGLDIRLEE.

It belongs to the RNA polymerase beta chain family. In terms of assembly, the RNAP catalytic core consists of 2 alpha, 1 beta, 1 beta' and 1 omega subunit. When a sigma factor is associated with the core the holoenzyme is formed, which can initiate transcription.

The enzyme catalyses RNA(n) + a ribonucleoside 5'-triphosphate = RNA(n+1) + diphosphate. Its function is as follows. DNA-dependent RNA polymerase catalyzes the transcription of DNA into RNA using the four ribonucleoside triphosphates as substrates. This Flavobacterium psychrophilum (strain ATCC 49511 / DSM 21280 / CIP 103535 / JIP02/86) protein is DNA-directed RNA polymerase subunit beta.